Consider the following 257-residue polypeptide: Pimeloyl-[acyl-carrier protein] methyl ester esterase (257 aa).

An AB hydrolase-1 domain is found at 16-240 (LVLIHGWGMN…EQASHAPFIS (225 aa)). Substrate is bound by residues Trp22, 82 to 83 (SL), and 143 to 147 (FMALQ). Residue Ser82 is the Nucleophile of the active site. Residues Asp207 and His235 contribute to the active site. His235 is a substrate binding site.

Belongs to the AB hydrolase superfamily. Carboxylesterase BioH family. Monomer.

It is found in the cytoplasm. It catalyses the reaction 6-carboxyhexanoyl-[ACP] methyl ester + H2O = 6-carboxyhexanoyl-[ACP] + methanol + H(+). It functions in the pathway cofactor biosynthesis; biotin biosynthesis. Functionally, the physiological role of BioH is to remove the methyl group introduced by BioC when the pimeloyl moiety is complete. It allows to synthesize pimeloyl-ACP via the fatty acid synthetic pathway through the hydrolysis of the ester bonds of pimeloyl-ACP esters. This Aliivibrio fischeri (strain ATCC 700601 / ES114) (Vibrio fischeri) protein is Pimeloyl-[acyl-carrier protein] methyl ester esterase.